Reading from the N-terminus, the 291-residue chain is MAPANLPSIFNATSQDIEQLLAAQCHIGSKNLGVHAQPYLWKTRADGVNIINIGKTWEKIVLAARIIAAIDNPSDVCVISARPYGQRAVLKFAAHTGAQAIAGRFTPGSFTNYITRSFKEPRLIVVTDPRTDAQAIKEASYVNIPVIALCDTDSPTEYVDVAIPTNNKGRHSIGLVWWMLAREVLRLRGTIYNREAPWDVMVDLYFYRDPEAEAEEKVEEEKLPGVDEEGVAAIESGFPAAGGDWEAAPAAFPAAGAATGEWSEAQGAQWETGTGAPAADWAAEPAKESSW.

A disordered region spans residues 255 to 291; it reads AGAATGEWSEAQGAQWETGTGAPAADWAAEPAKESSW.

This sequence belongs to the universal ribosomal protein uS2 family. Component of the small ribosomal subunit. Mature ribosomes consist of a small (40S) and a large (60S) subunit. The 40S subunit contains about 33 different proteins and 1 molecule of RNA (18S). The 60S subunit contains about 49 different proteins and 3 molecules of RNA (25S, 5.8S and 5S). Interacts with RPS21.

The protein resides in the cytoplasm. Its function is as follows. Required for the assembly and/or stability of the 40S ribosomal subunit. Required for the processing of the 20S rRNA-precursor to mature 18S rRNA in a late step of the maturation of 40S ribosomal subunits. This chain is Small ribosomal subunit protein uS2, found in Podospora anserina (strain S / ATCC MYA-4624 / DSM 980 / FGSC 10383) (Pleurage anserina).